Here is a 207-residue protein sequence, read N- to C-terminus: Large ribosomal subunit protein uL4 (207 aa).

The segment at 49 to 78 (HAVKNRSAVSGGGRKPWRQKGTGRARQGSI) is disordered.

The protein belongs to the universal ribosomal protein uL4 family. Part of the 50S ribosomal subunit.

In terms of biological role, one of the primary rRNA binding proteins, this protein initially binds near the 5'-end of the 23S rRNA. It is important during the early stages of 50S assembly. It makes multiple contacts with different domains of the 23S rRNA in the assembled 50S subunit and ribosome. Forms part of the polypeptide exit tunnel. The sequence is that of Large ribosomal subunit protein uL4 from Streptococcus equi subsp. zooepidemicus (strain MGCS10565).